The sequence spans 457 residues: UDP-N-acetylmuramoylalanine--D-glutamate ligase (457 aa).

116 to 122 (GTNGKTT) serves as a coordination point for ATP.

This sequence belongs to the MurCDEF family.

It localises to the cytoplasm. The enzyme catalyses UDP-N-acetyl-alpha-D-muramoyl-L-alanine + D-glutamate + ATP = UDP-N-acetyl-alpha-D-muramoyl-L-alanyl-D-glutamate + ADP + phosphate + H(+). Its pathway is cell wall biogenesis; peptidoglycan biosynthesis. Cell wall formation. Catalyzes the addition of glutamate to the nucleotide precursor UDP-N-acetylmuramoyl-L-alanine (UMA). This chain is UDP-N-acetylmuramoylalanine--D-glutamate ligase, found in Caldicellulosiruptor bescii (strain ATCC BAA-1888 / DSM 6725 / KCTC 15123 / Z-1320) (Anaerocellum thermophilum).